Reading from the N-terminus, the 216-residue chain is UPF0502 protein VCM66_A0698 (216 aa).

It belongs to the UPF0502 family.

The chain is UPF0502 protein VCM66_A0698 from Vibrio cholerae serotype O1 (strain M66-2).